The chain runs to 96 residues: Seed trypsin/chymotrypsin inhibitor IVA (96 aa).

A signal peptide spans 1-10 (LSFAANVVNA). Residues 11-24 (RFDSTSFITQVLSN) constitute a propeptide that is removed on maturation. Cystine bridges form between Cys-32/Cys-85, Cys-33/Cys-48, Cys-36/Cys-81, Cys-38/Cys-46, Cys-55/Cys-62, Cys-59/Cys-74, and Cys-64/Cys-72. Residues 88–96 (SEVEEVIKN) constitute a propeptide, removed in PSTI I.

Belongs to the Bowman-Birk serine protease inhibitor family. Seed.

In terms of biological role, inhibitor of trypsin and of chymotrypsin. May function as a natural phytochemical defense against predators. This Pisum sativum (Garden pea) protein is Seed trypsin/chymotrypsin inhibitor IVA (TI1236).